A 513-amino-acid polypeptide reads, in one-letter code: ATP synthase subunit alpha 1 (513 aa).

169–176 (GDRQCGKT) is a binding site for ATP.

Belongs to the ATPase alpha/beta chains family. In terms of assembly, F-type ATPases have 2 components, CF(1) - the catalytic core - and CF(0) - the membrane proton channel. CF(1) has five subunits: alpha(3), beta(3), gamma(1), delta(1), epsilon(1). CF(0) has three main subunits: a(1), b(2) and c(9-12). The alpha and beta chains form an alternating ring which encloses part of the gamma chain. CF(1) is attached to CF(0) by a central stalk formed by the gamma and epsilon chains, while a peripheral stalk is formed by the delta and b chains.

Its subcellular location is the cell inner membrane. The catalysed reaction is ATP + H2O + 4 H(+)(in) = ADP + phosphate + 5 H(+)(out). In terms of biological role, produces ATP from ADP in the presence of a proton gradient across the membrane. The alpha chain is a regulatory subunit. The protein is ATP synthase subunit alpha 1 of Burkholderia thailandensis (strain ATCC 700388 / DSM 13276 / CCUG 48851 / CIP 106301 / E264).